The chain runs to 765 residues: 1,4-alpha-glucan branching enzyme GlgB (765 aa).

Residue D431 is the Nucleophile of the active site. E484 serves as the catalytic Proton donor.

Belongs to the glycosyl hydrolase 13 family. GlgB subfamily. As to quaternary structure, monomer.

The catalysed reaction is Transfers a segment of a (1-&gt;4)-alpha-D-glucan chain to a primary hydroxy group in a similar glucan chain.. It functions in the pathway glycan biosynthesis; glycogen biosynthesis. In terms of biological role, catalyzes the formation of the alpha-1,6-glucosidic linkages in glycogen by scission of a 1,4-alpha-linked oligosaccharide from growing alpha-1,4-glucan chains and the subsequent attachment of the oligosaccharide to the alpha-1,6 position. The protein is 1,4-alpha-glucan branching enzyme GlgB of Synechococcus sp. (strain CC9311).